A 739-amino-acid polypeptide reads, in one-letter code: Gamma-tubulin complex component 4 homolog (739 aa).

This sequence belongs to the TUBGCP family.

It is found in the cytoplasm. The protein resides in the cytoskeleton. It localises to the microtubule organizing center. Its function is as follows. Gamma-tubulin complex is necessary for microtubule nucleation at the microtubule organizing centers (MTOCs). This chain is Gamma-tubulin complex component 4 homolog (85P), found in Medicago truncatula (Barrel medic).